Consider the following 647-residue polypeptide: Protein cueball (647 aa).

Positions 1–22 (MLWCPSVLVPLIAVAACLPVLA) are cleaved as a signal peptide. Residues 23–534 (IGTPLEWEFA…CMTPSPWTSN (512 aa)) lie on the Extracellular side of the membrane. N80 and N106 each carry an N-linked (GlcNAc...) asparagine glycan. LDL-receptor class B repeat units lie at residues 119–166 (RNLF…DVCR), 167–211 (RKLY…DQLS), and 212–257 (DRIF…TNDA). Residue N175 is glycosylated (N-linked (GlcNAc...) asparagine). An N-linked (GlcNAc...) asparagine glycan is attached at N316. EGF-like domains are found at residues 365–401 (DEKT…SRCE) and 436–473 (EISK…ERCE). 5 disulfide bridges follow: C376–C389, C391–C400, C440–C450, C444–C461, and C463–C472. An N-linked (GlcNAc...) asparagine glycan is attached at N475. The helical transmembrane segment at 535-555 (VIIVLVLGIVSCFFLVAVIVH) threads the bilayer. Residues 556–647 (GFRRLYKPKR…LIHNMDDDLY (92 aa)) lie on the Cytoplasmic side of the membrane.

This sequence belongs to the cueball family.

The protein localises to the cell membrane. Has a role in spermatogenesis and oogenesis. This is Protein cueball from Drosophila persimilis (Fruit fly).